A 513-amino-acid polypeptide reads, in one-letter code: E3 ubiquitin-protein ligase RNF25 (513 aa).

The RWD domain maps to 9–117 (SEIEVLQSIY…ERAKEILTDS (109 aa)). Residues cysteine 124, cysteine 127, cysteine 142, histidine 144, histidine 147, cysteine 150, cysteine 187, and cysteine 190 each coordinate Zn(2+). Residues 124–191 (CVICLYDFKE…ELAVVCPVCR (68 aa)) form an RING-type; atypical zinc finger. The segment at 261 to 513 (NLSDTPGMTD…EKEFRKEGVL (253 aa)) is disordered. Low complexity predominate over residues 271–297 (SSGAESSQSLPSSSPDSTSTTQTSQNQ). Composition is skewed to polar residues over residues 345–397 (SDKI…QDML) and 406–423 (EVSQ…QTIL). Residues 426–440 (GHPEREHVGRGDKRG) are compositionally biased toward basic and acidic residues. Residues 482-498 (AGRGHRGGGAYRGGGRG) show a composition bias toward gly residues. Over residues 501–513 (QRVEKEFRKEGVL) the composition is skewed to basic and acidic residues.

It belongs to the RNF25 family.

It localises to the cytoplasm. The catalysed reaction is S-ubiquitinyl-[E2 ubiquitin-conjugating enzyme]-L-cysteine + [acceptor protein]-L-lysine = [E2 ubiquitin-conjugating enzyme]-L-cysteine + N(6)-ubiquitinyl-[acceptor protein]-L-lysine.. The protein operates within protein modification; protein ubiquitination. Its function is as follows. E3 ubiquitin-protein ligase that plays a key role in the RNF14-RNF25 translation quality control pathway, a pathway that takes place when a ribosome has stalled during translation, and which promotes ubiquitination and degradation of translation factors on stalled ribosomes. May also acts as a positive regulator of the Wnt signaling. The polypeptide is E3 ubiquitin-protein ligase RNF25 (Danio rerio (Zebrafish)).